The chain runs to 312 residues: Short-chain dehydrogenase/reductase pkfC (312 aa).

3 residues coordinate NADP(+): K56, N108, and K140. The active-site Proton donor is the S164. Y193 and K197 together coordinate NADP(+). Catalysis depends on Y193, which acts as the Proton acceptor. The Lowers pKa of active site Tyr role is filled by K197.

It belongs to the short-chain dehydrogenases/reductases (SDR) family.

It participates in secondary metabolite biosynthesis. In terms of biological role, short-chain dehydrogenase/reductase; part of the gene cluster that mediates the biosynthesis of aspernidine A, a prenylated isoindolinone. The starting point of the biosynthesis of aspernidin A is the production of orsellinaldehyde by the non-reducing polyketide synthase pkfA. Hydroxylation, methylation of one of the phenol groups, and prenylation, presumably catalyzed by the prenyltransferase pkfE, would be needed to yield aspernidine D. Subsequently, the cytochrome P450 monooxygenase pkfB is responsible for hydroxylation of aspernidine D to yield aspernidine E. The dehydrogenase pkfF may be responsible for further oxidation of aspernidine E to form a dialdehyde intermediate which is further transformed in a series of steps, some of which are enzyme-mediated, to generate aspernidine A. The possibility that additional enzymes outside of the cluster are involved in aspernidine A biosynthesis cannot be excluded. This is Short-chain dehydrogenase/reductase pkfC from Emericella nidulans (strain FGSC A4 / ATCC 38163 / CBS 112.46 / NRRL 194 / M139) (Aspergillus nidulans).